The sequence spans 521 residues: Calcium-dependent protein kinase 33 (521 aa).

G2 carries N-myristoyl glycine lipidation. A disordered region spans residues 15–56 (PQQNGERSVEIENRRRSTHQDPSKISTGTNQPPPWRNPAKHS). Basic and acidic residues predominate over residues 21–36 (RSVEIENRRRSTHQDP). The region spanning 73–331 (YTLSKELGRG…AAEVLKHPWL (259 aa)) is the Protein kinase domain. Residues 79–87 (LGRGQFGVT) and K102 contribute to the ATP site. D197 functions as the Proton acceptor in the catalytic mechanism. Residue S237 is modified to Phosphoserine. The tract at residues 337-367 (ASDKPIDSAVLSRMKQFRAMNKLKKLALKVI) is autoinhibitory domain. 4 consecutive EF-hand domains span residues 374–409 (EEIQGLKAMFANIDTDNSGTITYEELKEGLAKLGSR), 410–445 (LTEAEVKQLMDAADVDGNGSIDYIEFITATMHRHRL), 446–481 (ESNENVYKAFQHFDKDGSGYITTDELEAALKEYGMG), and 482–516 (DDATIKEILSDVDADNDGRINYDEFCAMMRSGNPQ). Ca(2+) contacts are provided by D387, D389, S391, T393, E398, D423, D425, N427, S429, E434, D459, D461, S463, Y465, E470, D494, D496, D498, R500, and E505.

It belongs to the protein kinase superfamily. Ser/Thr protein kinase family. CDPK subfamily. In terms of assembly, interacts with THI1. Interacts with FD and FDP. In terms of processing, autophosphorylated. Expressed in primary roots, leaves, inflorescences, siliques and guard cells. Expressed in the shoot apical meristem.

It localises to the cell membrane. The protein localises to the nucleus. The protein resides in the cytoplasm. It carries out the reaction L-seryl-[protein] + ATP = O-phospho-L-seryl-[protein] + ADP + H(+). The enzyme catalyses L-threonyl-[protein] + ATP = O-phospho-L-threonyl-[protein] + ADP + H(+). With respect to regulation, activated by calcium. Autophosphorylation may play an important role in the regulation of the kinase activity. Repressed by THI1 through a negative regulation of the autophosphorylation activity in the presence of Ca(2+). In terms of biological role, ca(2+)-dependent protein kinase. Negative regulator of stomatal closure and slow anion currents. Unable to phosphorylate THI1 in vitro, but the kinase activity is essential for the stomatal closure regulation. Phosphorylates FD. May play a role in signal transduction pathways that involve calcium as a second messenger. The protein is Calcium-dependent protein kinase 33 of Arabidopsis thaliana (Mouse-ear cress).